A 648-amino-acid chain; its full sequence is Beta-glucuronidase (648 aa).

A signal peptide spans 1–19; the sequence is GLAMAWAVLGPLLWGCALA. 3 N-linked (GlcNAc...) asparagine glycosylation sites follow: Asn-170, Asn-269, and Asn-417. The Proton donor role is filled by Glu-448. The N-linked (GlcNAc...) asparagine glycan is linked to Asn-628.

This sequence belongs to the glycosyl hydrolase 2 family. In terms of assembly, homotetramer.

It is found in the lysosome. The enzyme catalyses a beta-D-glucuronoside + H2O = D-glucuronate + an alcohol. Inhibited by L-aspartic acid. Its function is as follows. Plays an important role in the degradation of dermatan and keratan sulfates. The chain is Beta-glucuronidase (GUSB) from Chlorocebus aethiops (Green monkey).